Consider the following 893-residue polypeptide: Probable disease resistance protein At1g62630 (893 aa).

Residues G24–E68 are a coiled coil. The 305-residue stretch at T136 to G440 folds into the NB-ARC domain. G179 to T186 contacts ATP. LRR repeat units follow at residues V516 to M537, E538 to K559, K571 to L593, S595 to K617, K618 to H640, and N641 to E663.

The protein belongs to the disease resistance NB-LRR family.

Its function is as follows. Probable disease resistance protein. This chain is Probable disease resistance protein At1g62630, found in Arabidopsis thaliana (Mouse-ear cress).